The following is a 280-amino-acid chain: Pantothenate synthetase (280 aa).

Residue 31–38 (MGNLHAGH) participates in ATP binding. His38 functions as the Proton donor in the catalytic mechanism. Gln62 provides a ligand contact to (R)-pantoate. Position 62 (Gln62) interacts with beta-alanine. Residue 150–153 (GKKD) coordinates ATP. Residue Gln156 participates in (R)-pantoate binding. ATP-binding positions include Val179 and 187–190 (MSSR).

The protein belongs to the pantothenate synthetase family. Homodimer.

The protein resides in the cytoplasm. The enzyme catalyses (R)-pantoate + beta-alanine + ATP = (R)-pantothenate + AMP + diphosphate + H(+). Its pathway is cofactor biosynthesis; (R)-pantothenate biosynthesis; (R)-pantothenate from (R)-pantoate and beta-alanine: step 1/1. In terms of biological role, catalyzes the condensation of pantoate with beta-alanine in an ATP-dependent reaction via a pantoyl-adenylate intermediate. In Xanthomonas axonopodis pv. citri (strain 306), this protein is Pantothenate synthetase.